The sequence spans 301 residues: Uricase (301 aa).

Catalysis depends on charge relay system residues Lys11 and Thr58. The urate site is built by Thr58, Asp59, Phe160, Arg177, Val228, Gln229, and Asn255. The active-site Charge relay system is His257. A Microbody targeting signal motif is present at residues 299–301; the sequence is AKL.

This sequence belongs to the uricase family.

The protein resides in the peroxisome. It carries out the reaction urate + O2 + H2O = 5-hydroxyisourate + H2O2. Its pathway is purine metabolism; urate degradation; (S)-allantoin from urate: step 1/3. Catalyzes the oxidation of uric acid to 5-hydroxyisourate, which is further processed to form (S)-allantoin. The protein is Uricase (uaZ) of Emericella nidulans (strain FGSC A4 / ATCC 38163 / CBS 112.46 / NRRL 194 / M139) (Aspergillus nidulans).